A 108-amino-acid polypeptide reads, in one-letter code: Large ribosomal subunit protein uL23 (108 aa).

The protein belongs to the universal ribosomal protein uL23 family. Part of the 50S ribosomal subunit. Contacts protein L29, and trigger factor when it is bound to the ribosome.

Functionally, one of the early assembly proteins it binds 23S rRNA. One of the proteins that surrounds the polypeptide exit tunnel on the outside of the ribosome. Forms the main docking site for trigger factor binding to the ribosome. The protein is Large ribosomal subunit protein uL23 of Mycoplasmoides gallisepticum (strain R(low / passage 15 / clone 2)) (Mycoplasma gallisepticum).